The chain runs to 367 residues: Phosphoribosylaminoimidazole-succinocarboxamide synthase (367 aa).

This sequence belongs to the SAICAR synthetase family.

The catalysed reaction is 5-amino-1-(5-phospho-D-ribosyl)imidazole-4-carboxylate + L-aspartate + ATP = (2S)-2-[5-amino-1-(5-phospho-beta-D-ribosyl)imidazole-4-carboxamido]succinate + ADP + phosphate + 2 H(+). It participates in purine metabolism; IMP biosynthesis via de novo pathway; 5-amino-1-(5-phospho-D-ribosyl)imidazole-4-carboxamide from 5-amino-1-(5-phospho-D-ribosyl)imidazole-4-carboxylate: step 1/2. The sequence is that of Phosphoribosylaminoimidazole-succinocarboxamide synthase from Vibrio atlanticus (strain LGP32) (Vibrio splendidus (strain Mel32)).